Here is a 373-residue protein sequence, read N- to C-terminus: ATP phosphoribosyltransferase regulatory subunit (373 aa).

The protein belongs to the class-II aminoacyl-tRNA synthetase family. HisZ subfamily. In terms of assembly, heteromultimer composed of HisG and HisZ subunits.

The protein localises to the cytoplasm. It participates in amino-acid biosynthesis; L-histidine biosynthesis; L-histidine from 5-phospho-alpha-D-ribose 1-diphosphate: step 1/9. In terms of biological role, required for the first step of histidine biosynthesis. May allow the feedback regulation of ATP phosphoribosyltransferase activity by histidine. This chain is ATP phosphoribosyltransferase regulatory subunit, found in Rhizobium johnstonii (strain DSM 114642 / LMG 32736 / 3841) (Rhizobium leguminosarum bv. viciae).